A 447-amino-acid polypeptide reads, in one-letter code: Argininosuccinate synthase (447 aa).

ATP-binding positions include 20–28 (AFSGGLDTS) and A46. An L-citrulline-binding site is contributed by Y102. The ATP site is built by G132 and T134. 3 residues coordinate L-aspartate: T134, N138, and D139. Residue N138 participates in L-citrulline binding. ATP is bound at residue D139. Residues R142 and S195 each contribute to the L-citrulline site. An ATP-binding site is contributed by D197. Residues T204, E206, and E283 each contribute to the L-citrulline site.

Belongs to the argininosuccinate synthase family. Type 2 subfamily. Homotetramer.

It is found in the cytoplasm. The enzyme catalyses L-citrulline + L-aspartate + ATP = 2-(N(omega)-L-arginino)succinate + AMP + diphosphate + H(+). It functions in the pathway amino-acid biosynthesis; L-arginine biosynthesis; L-arginine from L-ornithine and carbamoyl phosphate: step 2/3. The protein is Argininosuccinate synthase of Neisseria meningitidis serogroup C (strain 053442).